The sequence spans 396 residues: Glideosome-associated protein 50 (396 aa).

At 1-369 the chain is on the lumenal side; sequence MNYCKTTFHI…PMGNKDTFVR (369 aa). The a metal cation site is built by H195 and H256. Residues 370-390 form a helical membrane-spanning segment; it reads VVGTIGILIGSVIVFIGASSF. Residues 391 to 396 lie on the Cytoplasmic side of the membrane; that stretch reads LSKNMK.

This sequence belongs to the metallophosphoesterase superfamily. Purple acid phosphatase family. Component of the glideosome complex composed of GAP50, GAP45, MTIP and MyoA; the complex is formed during the late schizont stage and in merozoites. MyoA, MTIP and GAP45 probably form an initial complex in the cytoplasm which is then recruited to the outer face of the inner membrane complex via the interaction with GAP50. Interacts with GAP45; the interaction is independent of GAP45 phosphorylation status and can also occur independently of the formation of the glideosome complex. Interacts with human factor H isoform CFH (via sushi 6-7 domains) and isoform FHL-1 (via sushi 6-7 domains); the interaction occurs in the vector mosquito midgut at the surface of activated gametocytes; the interaction protects the parasite from alternative complement pathway-mediated elimination. The cofactor is a metal cation. The N-terminus signal is likely to be cleaved.

Its subcellular location is the inner membrane complex. The protein localises to the cell membrane. It is found in the endoplasmic reticulum membrane. The enzyme catalyses a phosphate monoester + H2O = an alcohol + phosphate. With respect to regulation, activity is independent of metal ions. Component of the glideosome complex, an inner membrane complex structure involved in parasite gliding motility and host cell invasion. During the asexual blood stage, may play a role in the assembly and anchoring of the glideosome complex to the inner membrane complex. During the sexual stage in the vector mosquito midgut, protects gametocytes against host alternative complement pathway-mediated elimination by interacting with host complement inhibitor factor H. Has phosphatase activity towards nucleotides such as ATP, vitamins B1 and B6, phosphorylated sugars, glycerol phosphates and inositol triphosphates. However, the phosphatase activity is controversial. In Plasmodium falciparum (isolate 3D7), this protein is Glideosome-associated protein 50.